The chain runs to 396 residues: MTTLNPYFGEFGGMYVPQILMPALKQLEEAFVSAQLDPEFQAEFQDLLKNYAGRPTALTLCQNLTKGTKTKLYLKREDLLHGGAHKTNQVLGQALLAKRMGKTEIIAETGAGQHGVASALACALLGLKCRIYMGAKDIERQSPNVFRMRLMGAEVIPVHSGSSTLKDACNEALRDWSGSYETAHYMLGTAAGPHPYPTIVREFQRMIGEETKAQMLAREGRLPDAVLACIGGGSNAIGMFADFIDEPGVGLIGVEPAGLGIETGQHGAPLKHGKVGIYFGMKSPMMQTSDGQIEESYSISAGLDFPSVGPQHAYLNSIGRADYVSVTDDEALDAFKALSCNEGIIPALESSHALAHALKMIKAEPEKEQILVVNLSGRGDKDIFTVHDILKARGEI.

Residue Lys-86 is modified to N6-(pyridoxal phosphate)lysine.

It belongs to the TrpB family. As to quaternary structure, tetramer of two alpha and two beta chains. Pyridoxal 5'-phosphate serves as cofactor.

The enzyme catalyses (1S,2R)-1-C-(indol-3-yl)glycerol 3-phosphate + L-serine = D-glyceraldehyde 3-phosphate + L-tryptophan + H2O. Its pathway is amino-acid biosynthesis; L-tryptophan biosynthesis; L-tryptophan from chorismate: step 5/5. The beta subunit is responsible for the synthesis of L-tryptophan from indole and L-serine. This Yersinia enterocolitica serotype O:8 / biotype 1B (strain NCTC 13174 / 8081) protein is Tryptophan synthase beta chain.